Reading from the N-terminus, the 572-residue chain is M-phase inducer phosphatase 3 (572 aa).

Disordered regions lie at residues 95-117 (NLGD…GKLE) and 304-354 (SPSM…QRRG). Residues 420-527 (LVEKFFIIDC…FFPEYKELCE (108 aa)) enclose the Rhodanese domain. The active site involves Cys-476.

This sequence belongs to the MPI phosphatase family.

The enzyme catalyses O-phospho-L-tyrosyl-[protein] + H2O = L-tyrosyl-[protein] + phosphate. Its function is as follows. This protein functions as a dosage-dependent inducer in mitotic control. It is a tyrosine protein phosphatase required for progression of the cell cycle. It may directly dephosphorylate p34(cdc2) and activate the p34(cdc2) kinase activity. This is M-phase inducer phosphatase 3 (cdc25-3) from Xenopus laevis (African clawed frog).